A 716-amino-acid chain; its full sequence is Iron-sulfur clusters transporter atm1, mitochondrial (716 aa).

Residues 1–18 constitute a mitochondrion transit peptide; it reads MAPSIKLSTMATSLHRAH. Residues 19–123 are Mitochondrial matrix-facing; that stretch reads GTSALLRRPR…PKGSWGDKAR (105 aa). The segment at 57–87 is disordered; sequence LFAPNGSAKDESKPAVSTVPKTTGRGPSDPL. A helical transmembrane segment spans residues 124–145; it reads VLLAIGLLVGGKVLNVQVPFYF. The ABC transmembrane type-1 domain occupies 124–414; that stretch reads VLLAIGLLVG…LGSVYRELRQ (291 aa). Topologically, residues 146-168 are mitochondrial intermembrane; it reads REIVDSLNIDFSTTGGSVTAVAG. The helical transmembrane segment at 169 to 192 threads the bilayer; the sequence is AMILGYGAARVGAVVSQELRNAVF. The Mitochondrial matrix portion of the chain corresponds to 193-241; that stretch reads ASVAQKAIRKVARNTFEHLLNLDLSFHLSKQTGGLTRAIDRGTKGISFL. A helical membrane pass occupies residues 242 to 265; sequence LTSMVFHIVPTALEISMVCGILTY. Residue Asn-266 is a topological domain, mitochondrial intermembrane. The chain crosses the membrane as a helical span at residues 267 to 287; the sequence is FGWQYAALTALTMVSYTAFTI. Residues 288–353 lie on the Mitochondrial matrix side of the membrane; it reads LTTAWRTKFR…NSIKVATSLA (66 aa). Glutathione is bound by residues 293 to 297 and 356 to 359; these read RTKFR and NSGQ. Residues 354-372 traverse the membrane as a helical segment; sequence FLNSGQNIIFSSALTVMMY. Over 373–387 the chain is Mitochondrial intermembrane; the sequence is MGAHGVATGQLTVGD. Residues 388–409 form a helical membrane-spanning segment; the sequence is LVLINQLVFQLSVPLNFLGSVY. Gly-406 lines the glutathione pocket. At 410–716 the chain is on the mitochondrial matrix side; sequence RELRQSLLDM…KEEVGEKKEA (307 aa). The ABC transporter domain maps to 449-690; the sequence is IEFKDVTFGY…NGVYAQLWRA (242 aa). Residues Tyr-458 and 482-493 contribute to the ATP site; that span reads GPSGCGKSTLLR. Positions 697–716 are disordered; it reads EEGEVSKKGEKEEVGEKKEA. Residues 700 to 716 show a composition bias toward basic and acidic residues; the sequence is EVSKKGEKEEVGEKKEA.

The protein belongs to the ABC transporter superfamily. ABCB family. Heavy Metal importer (TC 3.A.1.210) subfamily. In terms of assembly, homodimer.

Its subcellular location is the mitochondrion inner membrane. Performs an essential function in the generation of cytoplasmic iron-sulfur proteins by mediating the ATP-dependent export of Fe/S cluster precursors synthesized by egt-3 and other mitochondrial proteins. Hydrolyzes ATP. Binds glutathione and may function by transporting a glutathione-conjugated iron-sulfur compound. This chain is Iron-sulfur clusters transporter atm1, mitochondrial, found in Neurospora crassa (strain ATCC 24698 / 74-OR23-1A / CBS 708.71 / DSM 1257 / FGSC 987).